Here is a 271-residue protein sequence, read N- to C-terminus: Tryptophan synthase alpha chain (271 aa).

Active-site proton acceptor residues include Glu-49 and Asp-60.

It belongs to the TrpA family. As to quaternary structure, tetramer of two alpha and two beta chains.

The catalysed reaction is (1S,2R)-1-C-(indol-3-yl)glycerol 3-phosphate + L-serine = D-glyceraldehyde 3-phosphate + L-tryptophan + H2O. Its pathway is amino-acid biosynthesis; L-tryptophan biosynthesis; L-tryptophan from chorismate: step 5/5. Its function is as follows. The alpha subunit is responsible for the aldol cleavage of indoleglycerol phosphate to indole and glyceraldehyde 3-phosphate. This chain is Tryptophan synthase alpha chain, found in Leptothrix cholodnii (strain ATCC 51168 / LMG 8142 / SP-6) (Leptothrix discophora (strain SP-6)).